A 312-amino-acid chain; its full sequence is Dehydrin CAS31 (312 aa).

Disordered regions lie at residues 1-88 and 248-287; these read MSQY…HTGG and GTEQNTYGTGTGTGHGTTGYGSTGTGHGTTGYGDEQHHGE. Polar residues predominate over residues 21-30; sequence PLTSQGQVDQ. A compositionally biased stretch (gly residues) spans 35–46; the sequence is ISGGGMTGATGH. The span at 55-66 shows a compositional bias: low complexity; sequence HGVGVDQTTGFG. Composition is skewed to gly residues over residues 67–88 and 256–278; these read SNTGTGTGYGTHTGSGGTHTGG and TGTGTGHGTTGYGSTGTGHGTTG.

The protein belongs to the plant dehydrin family. In terms of assembly, interacts with the leghemoglobin LB120-1 in the cytoplasm; this interaction leads to LB120-1 protection from denaturation under thermal and drought stresses. In terms of tissue distribution, expressed in nodules and roots.

Its subcellular location is the cytoplasm. Intrinsically disordered protein acting as a chaperone. Ensures leghemoglobins (e.g. LB120-1) protection from denaturation under thermal and drought stresses to delay root nodule nitrogenase inactivation and subsequent nodule senescence, thus supporting symbiotic nitrogen fixation (SNF). The chain is Dehydrin CAS31 from Medicago truncatula (Barrel medic).